A 503-amino-acid polypeptide reads, in one-letter code: Aromatase (503 aa).

The next 2 helical transmembrane spans lie at 19–39 (EVVP…LLVW) and 53–73 (FLGI…IGSA). The substrate site is built by Asp-309 and Met-374. Cys-437 serves as a coordination point for heme.

The protein belongs to the cytochrome P450 family. Requires heme as cofactor.

The protein resides in the endoplasmic reticulum membrane. It is found in the microsome membrane. The catalysed reaction is testosterone + 3 reduced [NADPH--hemoprotein reductase] + 3 O2 = 17beta-estradiol + formate + 3 oxidized [NADPH--hemoprotein reductase] + 4 H2O + 4 H(+). The enzyme catalyses androst-4-ene-3,17-dione + 3 reduced [NADPH--hemoprotein reductase] + 3 O2 = estrone + formate + 3 oxidized [NADPH--hemoprotein reductase] + 4 H2O + 4 H(+). It carries out the reaction androst-4-ene-3,17-dione + reduced [NADPH--hemoprotein reductase] + O2 = 19-hydroxyandrost-4-ene-3,17-dione + oxidized [NADPH--hemoprotein reductase] + H2O + H(+). It catalyses the reaction 19-hydroxyandrost-4-ene-3,17-dione + reduced [NADPH--hemoprotein reductase] + O2 = 19-oxo-androst-4-ene-3,17-dione + oxidized [NADPH--hemoprotein reductase] + 2 H2O + H(+). The catalysed reaction is 19-oxo-androst-4-ene-3,17-dione + reduced [NADPH--hemoprotein reductase] + O2 = estrone + formate + oxidized [NADPH--hemoprotein reductase] + H2O + 2 H(+). The enzyme catalyses estrone + reduced [NADPH--hemoprotein reductase] + O2 = 2-hydroxyestrone + oxidized [NADPH--hemoprotein reductase] + H2O + H(+). It carries out the reaction 17beta-hydroxy-5alpha-androstan-3-one + reduced [NADPH--hemoprotein reductase] + O2 = 17beta,19-dihydroxy-3-oxo-5alpha-androstanone + oxidized [NADPH--hemoprotein reductase] + H2O + H(+). It catalyses the reaction 17beta,19-dihydroxy-3-oxo-5alpha-androstanone + reduced [NADPH--hemoprotein reductase] + O2 = 17beta-hydroxy-3,19-dioxo-5alpha-androstanone + oxidized [NADPH--hemoprotein reductase] + 2 H2O + H(+). The catalysed reaction is 17beta-hydroxy-3,19-dioxo-5alpha-androstanone + reduced [NADPH--hemoprotein reductase] + O2 = 17beta-hydroxy-3-oxo-19-nor-5alpha-androst-1-ene + formate + oxidized [NADPH--hemoprotein reductase] + H2O + 2 H(+). Its pathway is steroid hormone biosynthesis. In terms of biological role, a cytochrome P450 monooxygenase that catalyzes the conversion of C19 androgens, androst-4-ene-3,17-dione (androstenedione) and testosterone to the C18 estrogens, estrone and estradiol, respectively. Catalyzes three successive oxidations of C19 androgens: two conventional oxidations at C19 yielding 19-hydroxy and 19-oxo/19-aldehyde derivatives, followed by a third oxidative aromatization step that involves C1-beta hydrogen abstraction combined with cleavage of the C10-C19 bond to yield a phenolic A ring and formic acid. Alternatively, the third oxidative reaction yields a 19-norsteroid and formic acid. Converts dihydrotestosterone to delta1,10-dehydro 19-nordihydrotestosterone and may play a role in homeostasis of this potent androgen. Also displays 2-hydroxylase activity toward estrone. Mechanistically, uses molecular oxygen inserting one oxygen atom into a substrate, and reducing the second into a water molecule, with two electrons provided by NADPH via cytochrome P450 reductase (CPR; NADPH-ferrihemoprotein reductase). The polypeptide is Aromatase (CYP19A1) (Bos taurus (Bovine)).